Reading from the N-terminus, the 351-residue chain is MLPDWINSECPAPSGAHRESALARQAQLTKPLGALGRLEEVAVELAALQAAEKPAAERVPVVLFAGDHGIAAQGVSAYPPEVTVQMLHNFAGGGAAIAVLAHSLGCPLEVVDVGTLADGQMRGVVVDKPRRGTRDFSVEQALTPADVAFVSEAGLRAVARQADHAPDLVIFGEMGIGNTTSAAAIAAALLACAPADIVGSGTGLDAEGRARKAKVIEDALTRHGLTAATPVAEVLAAVGGLEIIAMAGAIVAAAQRSWPVLVDGFIVSVAALVATRLNPSCRPWLLFSHRSAERGHAVVLDALGARPLIDLDLRLGEASGAATALPILRLACALHNGMATFAEAAVSGREA.

Glu317 (proton acceptor) is an active-site residue.

The protein belongs to the CobT family.

The enzyme catalyses 5,6-dimethylbenzimidazole + nicotinate beta-D-ribonucleotide = alpha-ribazole 5'-phosphate + nicotinate + H(+). It functions in the pathway nucleoside biosynthesis; alpha-ribazole biosynthesis; alpha-ribazole from 5,6-dimethylbenzimidazole: step 1/2. Functionally, catalyzes the synthesis of alpha-ribazole-5'-phosphate from nicotinate mononucleotide (NAMN) and 5,6-dimethylbenzimidazole (DMB). This chain is Nicotinate-nucleotide--dimethylbenzimidazole phosphoribosyltransferase, found in Bradyrhizobium sp. (strain ORS 278).